We begin with the raw amino-acid sequence, 301 residues long: Protoheme IX farnesyltransferase 1 (301 aa).

The next 9 membrane-spanning stretches (helical) occupy residues 29-49 (VVAL…PHAV), 51-71 (VQPL…AAAL), 101-121 (ALIF…SLVN), 123-143 (LTAW…TAYL), 150-170 (NIVI…TAVT), 177-197 (ALLL…ALAI), 223-243 (CILL…LVGM), 244-264 (CGPV…YKAW), and 274-294 (LAMQ…MALL).

It belongs to the UbiA prenyltransferase family. Protoheme IX farnesyltransferase subfamily.

It localises to the cell inner membrane. The enzyme catalyses heme b + (2E,6E)-farnesyl diphosphate + H2O = Fe(II)-heme o + diphosphate. It participates in porphyrin-containing compound metabolism; heme O biosynthesis; heme O from protoheme: step 1/1. Converts heme B (protoheme IX) to heme O by substitution of the vinyl group on carbon 2 of heme B porphyrin ring with a hydroxyethyl farnesyl side group. This is Protoheme IX farnesyltransferase 1 from Shewanella baltica (strain OS195).